The chain runs to 35 residues: Coenzyme PQQ synthesis protein A (35 aa).

The segment at residues 16 to 20 is a cross-link (pyrroloquinoline quinone (Glu-Tyr)); the sequence is EINMY.

It belongs to the PqqA family.

It participates in cofactor biosynthesis; pyrroloquinoline quinone biosynthesis. Its function is as follows. Required for coenzyme pyrroloquinoline quinone (PQQ) biosynthesis. PQQ is probably formed by cross-linking a specific glutamate to a specific tyrosine residue and excising these residues from the peptide. The sequence is that of Coenzyme PQQ synthesis protein A from Ruegeria pomeroyi (strain ATCC 700808 / DSM 15171 / DSS-3) (Silicibacter pomeroyi).